The chain runs to 361 residues: Histidinol-phosphate aminotransferase (361 aa).

Lys-219 bears the N6-(pyridoxal phosphate)lysine mark.

It belongs to the class-II pyridoxal-phosphate-dependent aminotransferase family. Histidinol-phosphate aminotransferase subfamily. As to quaternary structure, homodimer. It depends on pyridoxal 5'-phosphate as a cofactor.

It catalyses the reaction L-histidinol phosphate + 2-oxoglutarate = 3-(imidazol-4-yl)-2-oxopropyl phosphate + L-glutamate. Its pathway is amino-acid biosynthesis; L-histidine biosynthesis; L-histidine from 5-phospho-alpha-D-ribose 1-diphosphate: step 7/9. In Acinetobacter baylyi (strain ATCC 33305 / BD413 / ADP1), this protein is Histidinol-phosphate aminotransferase.